The sequence spans 624 residues: MKKNRFTYGLALGALGIVFGDIGTSPLYALKVTLSGIPINQFNILGVLSLIFWSLIIVVSFKYLMIIFRADNDGEGGILALLALMKHKSTKYQPVFYIVAIFGAGLLLGDGMLTPAISVVSAVEGLGTLSDKLYPYVLPIASLILVLLFSLQAKGTARIGYLFGPLILIWFITIAILGILQILEHPVVLKAINPYYAIAFLVDEGLRGYFLLGGIFLVVTGGEALFADIGHFGKNPIRFSWFFIALPCLLLNYFGQGANLIVRPEEISNPFFMIAPPWFYLPLIIIATVATVIASQAVISATFSLTKQAVLLGLCPKIPIVQTSMLHSGQIYVPQINFILFIGTMAFCLAFKTSDNLAHAYGIAVNLEMLLVDAMVAYAAVSIWRWSTFNVIFLFGLFLLIDLAFLGANTHKFITGGWVPIVLAFFIAFIMYSWRYGLEYLRDNFYMNKEDISKILKQLQYKSLNQLPGVSAIFITDVYDKSGGSFLHFLKLNRSVPENVLIVNYIVDNIPYVHYSQRYEIVCLDEKVCKLVIHYGFMETINIPRSLEKACNKNILPFKFNVDTATFMVEIPNIMASKEKRSLSFYWQEKLFAFLMRNYSANLNIEFYKLPYNRTIAIGTYCIL.

12 helical membrane passes run 10–30 (LALGALGIVFGDIGTSPLYAL), 48–68 (LSLIFWSLIIVVSFKYLMIIF), 94–114 (PVFYIVAIFGAGLLLGDGMLT), 133–153 (LYPYVLPIASLILVLLFSLQA), 159–179 (IGYLFGPLILIWFITIAILGI), 210–230 (FLLGGIFLVVTGGEALFADIG), 242–262 (FFIALPCLLLNYFGQGANLIV), 270–290 (PFFMIAPPWFYLPLIIIATVA), 331–351 (IYVPQINFILFIGTMAFCLAF), 363–383 (IAVNLEMLLVDAMVAYAAVSI), 388–408 (TFNVIFLFGLFLLIDLAFLGA), and 413–433 (FITGGWVPIVLAFFIAFIMYS).

It belongs to the HAK/KUP transporter (TC 2.A.72) family.

Its subcellular location is the cell inner membrane. The enzyme catalyses K(+)(in) + H(+)(in) = K(+)(out) + H(+)(out). Transport of potassium into the cell. Likely operates as a K(+):H(+) symporter. This Legionella pneumophila (strain Paris) protein is Probable potassium transport system protein Kup 1.